Consider the following 289-residue polypeptide: ATP synthase gamma chain (289 aa).

This sequence belongs to the ATPase gamma chain family. As to quaternary structure, F-type ATPases have 2 components, CF(1) - the catalytic core - and CF(0) - the membrane proton channel. CF(1) has five subunits: alpha(3), beta(3), gamma(1), delta(1), epsilon(1). CF(0) has three main subunits: a, b and c.

The protein localises to the cell inner membrane. Functionally, produces ATP from ADP in the presence of a proton gradient across the membrane. The gamma chain is believed to be important in regulating ATPase activity and the flow of protons through the CF(0) complex. The protein is ATP synthase gamma chain of Coxiella burnetii (strain CbuK_Q154) (Coxiella burnetii (strain Q154)).